A 465-amino-acid chain; its full sequence is UDP-N-acetylmuramate--L-alanine ligase (465 aa).

112-118 lines the ATP pocket; that stretch reads GTHGKTT.

The protein belongs to the MurCDEF family.

It is found in the cytoplasm. The enzyme catalyses UDP-N-acetyl-alpha-D-muramate + L-alanine + ATP = UDP-N-acetyl-alpha-D-muramoyl-L-alanine + ADP + phosphate + H(+). Its pathway is cell wall biogenesis; peptidoglycan biosynthesis. In terms of biological role, cell wall formation. This Burkholderia mallei (strain NCTC 10247) protein is UDP-N-acetylmuramate--L-alanine ligase.